The following is a 568-amino-acid chain: Peptidoglycan D,D-transpeptidase FtsI (568 aa).

A helical transmembrane segment spans residues 19-39 (FVTLCSIVFLFLVILTLRIIF). Ser302 functions as the Acyl-ester intermediate in the catalytic mechanism.

It belongs to the transpeptidase family. FtsI subfamily.

It localises to the cell inner membrane. It carries out the reaction Preferential cleavage: (Ac)2-L-Lys-D-Ala-|-D-Ala. Also transpeptidation of peptidyl-alanyl moieties that are N-acyl substituents of D-alanine.. It participates in cell wall biogenesis; peptidoglycan biosynthesis. Its function is as follows. Catalyzes cross-linking of the peptidoglycan cell wall at the division septum. The sequence is that of Peptidoglycan D,D-transpeptidase FtsI from Buchnera aphidicola subsp. Schizaphis graminum (strain Sg).